A 500-amino-acid chain; its full sequence is Probable malate:quinone oxidoreductase (500 aa).

Belongs to the MQO family. It depends on FAD as a cofactor.

It catalyses the reaction (S)-malate + a quinone = a quinol + oxaloacetate. It functions in the pathway carbohydrate metabolism; tricarboxylic acid cycle; oxaloacetate from (S)-malate (quinone route): step 1/1. The sequence is that of Probable malate:quinone oxidoreductase from Corynebacterium glutamicum (strain R).